We begin with the raw amino-acid sequence, 197 residues long: Scoloptoxin SSD20 (197 aa).

An N-terminal signal peptide occupies residues 1-6; it reads PPMTTE.

In terms of tissue distribution, expressed by the venom gland.

Its subcellular location is the secreted. In terms of biological role, may act as a voltage-gated potassium channel inhibitor. Is highly similar to the subunit beta of SSD14 which, when complexed with subunit alpha, induces platelet aggregation and hemolysis. In Scolopendra dehaani (Thai centipede), this protein is Scoloptoxin SSD20.